Reading from the N-terminus, the 124-residue chain is Small ribosomal subunit protein uS12 (124 aa).

D89 is subject to 3-methylthioaspartic acid.

The protein belongs to the universal ribosomal protein uS12 family. Part of the 30S ribosomal subunit. Contacts proteins S8 and S17. May interact with IF1 in the 30S initiation complex.

With S4 and S5 plays an important role in translational accuracy. In terms of biological role, interacts with and stabilizes bases of the 16S rRNA that are involved in tRNA selection in the A site and with the mRNA backbone. Located at the interface of the 30S and 50S subunits, it traverses the body of the 30S subunit contacting proteins on the other side and probably holding the rRNA structure together. The combined cluster of proteins S8, S12 and S17 appears to hold together the shoulder and platform of the 30S subunit. The sequence is that of Small ribosomal subunit protein uS12 from Yersinia pestis (strain Pestoides F).